The chain runs to 386 residues: O-methyltransferase aunE (386 aa).

Tryptophan 200 contributes to the S-adenosyl-L-methionine binding site. Catalysis depends on histidine 299, which acts as the Proton acceptor.

This sequence belongs to the class I-like SAM-binding methyltransferase superfamily. Cation-independent O-methyltransferase family.

The protein operates within secondary metabolite biosynthesis. Its function is as follows. O-methyltransferase; part of the gene cluster that mediates the biosynthesis of aurasperone B, a dimeric gamma-naphthopyrone. The first step in the biosynthesis of aurasperone B is the production of gamma-naphthopyrone precursor YWA1 by the non-reducing polyketide synthase albA, via condensation of one acetyl-CoA starter unit with 6 malonyl-CoA units. YWA1 is then methylated by aunE at position C-6 to yield foncesin which is further methylated at position C-8 by aunD to produce fonsecin B. A key enzyme in the biosynthetic pathway is the cytochrome P450 monooxygenase aunB which catalyzes the oxidative dimerization of fonsecin B to aurasperone B. AunB also catalyzes the oxidative dimerization of rubrofusarin B into aurasperone A. This Aspergillus niger (strain ATCC MYA-4892 / CBS 513.88 / FGSC A1513) protein is O-methyltransferase aunE.